The chain runs to 353 residues: Fasciculation and elongation protein zeta-2 (353 aa).

The segment at 19-49 (SLLDQENCNASPEPGAEAGAEAGGGADGFPA) is disordered. Low complexity predominate over residues 28-38 (ASPEPGAEAGA). Ser135, Ser176, and Ser195 each carry phosphoserine. Positions 214-286 (KRLSVSELNE…AKKKKKLKNG (73 aa)) form a coiled coil. Positions 271-300 (KEHKETAKKKKKLKNGSSQNGKNERSHMPG) are disordered.

It belongs to the zygin family. As to quaternary structure, homodimer; disulfide-linked. May form heterodimers with FEZ1. Interacts with synaptotagmin. As to expression, expressed in nonneural tissues, such as heart, lung, spleen, muscle, testis, placenta and melanocytes.

Functionally, involved in axonal outgrowth and fasciculation. This is Fasciculation and elongation protein zeta-2 (FEZ2) from Homo sapiens (Human).